The primary structure comprises 333 residues: Coiled-coil domain-containing protein 68 (333 aa).

2 coiled-coil regions span residues 86–120 (LDLL…SREA) and 160–302 (EKEQ…HWTE).

As to quaternary structure, interacts with CEP170.

It localises to the cytoplasm. It is found in the cytoskeleton. The protein localises to the microtubule organizing center. Its subcellular location is the centrosome. The protein resides in the centriole. Its function is as follows. Centriolar protein required for centriole subdistal appendage assembly and microtubule anchoring in interphase cells. Together with CCDC120, cooperate with subdistal appendage components ODF2, NIN and CEP170 for hierarchical subdistal appendage assembly. The polypeptide is Coiled-coil domain-containing protein 68 (Ccdc68) (Mus musculus (Mouse)).